The primary structure comprises 257 residues: Spermidine/putrescine transport system permease protein PotC (257 aa).

At 1 to 7 (MSRFFLR) the chain is on the cytoplasmic side. Residues 8 to 27 (NAFMFVVYAYLYIPIIILVT) form a helical membrane-spanning segment. The Periplasmic portion of the chain corresponds to 28–65 (NSFNKDRYGLSWKGFSWNWYERLFNNDTLIQAAIHSVT). An ABC transmembrane type-1 domain is found at 60–248 (AIHSVTIAFF…VLSLALVVLS (189 aa)). The helical transmembrane segment at 66 to 85 (IAFFAATLATIVGGLTAIAL) threads the bilayer. Topologically, residues 86 to 100 (YRYRFRGKQAVSGML) are cytoplasmic. Residues 101-120 (FIVMMSPDIVMAVSLLALFM) form a helical membrane-spanning segment. The Periplasmic segment spans residues 121–128 (VVGISLGF). The chain crosses the membrane as a helical span at residues 129–148 (WSLLLAHVTFCLPYVTVTIF). Over 149–176 (SRLNGFDSRMLEAAKDLGASEVTILRKI) the chain is Cytoplasmic. The helical transmembrane segment at 177-196 (ILPLALPAVVSGWLLSFTIS) threads the bilayer. Residues 197–231 (LDDVVVSSFVSGVSYEILPLRIFSLVKTGVTPEVN) are Periplasmic-facing. Residues 232–251 (ALATIMIVLSLALVVLSQLI) traverse the membrane as a helical segment. Residues 252 to 257 (TRKNNH) are Cytoplasmic-facing.

The protein belongs to the binding-protein-dependent transport system permease family. CysTW subfamily.

The protein localises to the cell inner membrane. Required for the activity of the bacterial periplasmic transport system of putrescine and spermidine. This chain is Spermidine/putrescine transport system permease protein PotC (potC), found in Haemophilus influenzae (strain ATCC 51907 / DSM 11121 / KW20 / Rd).